Reading from the N-terminus, the 258-residue chain is Tetraspanin-18B (258 aa).

Over 1 to 25 (MGLGEASARGTSMEGDCLSCIKYLM) the chain is Cytoplasmic. Residues 26-46 (FVFNFLIFLGGSFLLGVGVWV) form a helical membrane-spanning segment. At 47 to 61 (VVDPTGFREIVAANP) the chain is on the extracellular side. Residues 62-82 (LLFTGVYIILAMGGMLFLLGF) form a helical membrane-spanning segment. The Cytoplasmic segment spans residues 83 to 94 (LGCCGAIRENKC). The helical transmembrane segment at 95-115 (LLLFFFMLILIIFLAELAAAI) threads the bilayer. At 116–228 (LAFIFREHLT…SAVVDYFEMY (113 aa)) the chain is on the extracellular side. The N-linked (GlcNAc...) asparagine glycan is linked to Asn141. A helical membrane pass occupies residues 229-249 (IYVAGALAIVVLTIELFAMVF). The Cytoplasmic segment spans residues 250 to 258 (AMCLFRGIQ).

The protein belongs to the tetraspanin (TM4SF) family.

It localises to the membrane. Its function is as follows. May regulate angiogenesis through KDR/VEGFR2 and NOTCH1 pathways. This Danio rerio (Zebrafish) protein is Tetraspanin-18B (tspan18b).